A 244-amino-acid chain; its full sequence is rRNA adenine N-6-methyltransferase (244 aa).

S-adenosyl-L-methionine-binding residues include asparagine 11, isoleucine 13, glycine 38, glutamate 59, aspartate 84, and asparagine 101.

This sequence belongs to the class I-like SAM-binding methyltransferase superfamily. rRNA adenine N(6)-methyltransferase family.

The catalysed reaction is adenosine(2085) in 23S rRNA + 2 S-adenosyl-L-methionine = N(6)-dimethyladenosine(2085) in 23S rRNA + 2 S-adenosyl-L-homocysteine + 2 H(+). Its function is as follows. This protein produces a dimethylation of the adenine residue at position 2085 in 23S rRNA, resulting in reduced affinity between ribosomes and macrolide-lincosamide-streptogramin B antibiotics. This chain is rRNA adenine N-6-methyltransferase (ermM), found in Staphylococcus epidermidis.